The chain runs to 288 residues: Probable coatomer subunit epsilon (288 aa).

At serine 262 the chain carries Phosphoserine.

This sequence belongs to the COPE family. Oligomeric complex that consists of at least the alpha, beta, beta', gamma, delta, epsilon and zeta subunits.

The protein localises to the cytoplasm. It is found in the golgi apparatus membrane. Its subcellular location is the cytoplasmic vesicle. It localises to the COPI-coated vesicle membrane. In terms of biological role, the coatomer is a cytosolic protein complex that binds to dilysine motifs and reversibly associates with Golgi non-clathrin-coated vesicles, which further mediate biosynthetic protein transport from the ER, via the Golgi up to the trans Golgi network. The coatomer complex is required for budding from Golgi membranes, and is essential for the retrograde Golgi-to-ER transport of dilysine-tagged proteins. The sequence is that of Probable coatomer subunit epsilon (sec28) from Schizosaccharomyces pombe (strain 972 / ATCC 24843) (Fission yeast).